A 152-amino-acid chain; its full sequence is Ribosome maturation factor RimP (152 aa).

It belongs to the RimP family.

It is found in the cytoplasm. Required for maturation of 30S ribosomal subunits. This Teredinibacter turnerae (strain ATCC 39867 / T7901) protein is Ribosome maturation factor RimP.